The primary structure comprises 503 residues: D-xylose-proton symporter-like 2 (503 aa).

Residues 1-15 (MALDPEQQQPISSVS) are compositionally biased toward polar residues. The tract at residues 1-32 (MALDPEQQQPISSVSREFGKSSGEISPEREPL) is disordered. An N-acetylalanine modification is found at Ala-2. The residue at position 26 (Ser-26) is a Phosphoserine. 12 helical membrane-spanning segments follow: residues 42-62 (YSVVAAILPFLFPALGGLLYG), 99-119 (GSLYGALFGSIVAFTIADVIG), 124-144 (LILAALLYLVGALVTALAPTY), 146-166 (VLIIGRVIYGVSVGLAMHAAP), 187-207 (FFIVLGMVGGYGIGSLTVNVH), 213-233 (MYATSVPLAVIMGIGMWWLPA), 305-325 (ALIIGGGLVLFQQITGQPSVL), 346-366 (VSILLGLLKLIMTGVAVVVID), 375-395 (LGGVGGMVVSLFLLGSYYLFF), 400-420 (VVAVVALLLYVGCYQLSFGPI), 437-457 (GLSLAVLVNFGANALVTFAFS), and 467-487 (ILFCGFGVICVLSLVFIFFIV).

It belongs to the major facilitator superfamily. Sugar transporter (TC 2.A.1.1) family.

The protein localises to the membrane. The chain is D-xylose-proton symporter-like 2 from Arabidopsis thaliana (Mouse-ear cress).